The primary structure comprises 217 residues: Adenylate kinase (217 aa).

10 to 15 (GAGKGT) contributes to the ATP binding site. The NMP stretch occupies residues 30–59 (STGDMFRAAMKEGTPLGLQAKQYMDRGDLV). AMP-binding positions include Thr-31, Arg-36, 57–59 (DLV), 85–88 (GFPR), and Gln-92. The segment at 126–163 (GRRICRNCGATYHLIFHPPAKPGVCDKCGGELYQRADD) is LID. Residue Arg-127 coordinates ATP. Zn(2+)-binding residues include Cys-130 and Cys-133. ATP is bound at residue 136-137 (TY). Positions 150 and 153 each coordinate Zn(2+). Positions 160 and 171 each coordinate AMP. Gln-199 lines the ATP pocket.

The protein belongs to the adenylate kinase family. In terms of assembly, monomer.

The protein resides in the cytoplasm. The enzyme catalyses AMP + ATP = 2 ADP. It functions in the pathway purine metabolism; AMP biosynthesis via salvage pathway; AMP from ADP: step 1/1. Functionally, catalyzes the reversible transfer of the terminal phosphate group between ATP and AMP. Plays an important role in cellular energy homeostasis and in adenine nucleotide metabolism. The polypeptide is Adenylate kinase (Geobacillus stearothermophilus (Bacillus stearothermophilus)).